Here is a 119-residue protein sequence, read N- to C-terminus: Large ribosomal subunit protein uL18 (119 aa).

This sequence belongs to the universal ribosomal protein uL18 family. Part of the 50S ribosomal subunit; part of the 5S rRNA/L5/L18/L25 subcomplex. Contacts the 5S and 23S rRNAs.

Functionally, this is one of the proteins that bind and probably mediate the attachment of the 5S RNA into the large ribosomal subunit, where it forms part of the central protuberance. This Clostridium kluyveri (strain ATCC 8527 / DSM 555 / NBRC 12016 / NCIMB 10680 / K1) protein is Large ribosomal subunit protein uL18.